Consider the following 302-residue polypeptide: Late embryogenesis abundant protein D-29 (302 aa).

Disordered regions lie at residues 25–93, 168–193, and 205–302; these read HMPS…AKEY, VKNA…LADS, and AKEK…NHKN. 2 stretches are compositionally biased toward basic and acidic residues: residues 34–70 and 79–93; these read RDYS…HAAN and AKDR…AKEY. The segment covering 205-286 has biased composition (basic and acidic residues); the sequence is AKEKVRDMAD…KAEETIESAK (82 aa).

It belongs to the LEA type 1 family.

Its function is as follows. LEA protein are late embryonic proteins abundant in higher plant seed embryos. There are two subsets of LEA proteins (5a and 5b), the first ones are expressed when the cotyledon weight reach 80 mg and the second set are expressed above 100 mg. The function of those proteins is not known. In Gossypium hirsutum (Upland cotton), this protein is Late embryogenesis abundant protein D-29.